A 420-amino-acid chain; its full sequence is tRNA (guanine-N(7)-)-methyltransferase non-catalytic subunit TRM82 (420 aa).

Residues 59–68 (KENDSKRQKS) are compositionally biased toward basic and acidic residues. Residues 59-82 (KENDSKRQKSESGQAKVSKIPTPG) form a disordered region. WD repeat units lie at residues 87 to 127 (PIYN…DNCL), 179 to 220 (GHVS…VIKN), 224 to 266 (GHHE…AKIE), and 340 to 379 (SYED…EETN).

Belongs to the WD repeat TRM82 family. Forms a heterodimer with the catalytic subunit TRM8.

It is found in the nucleus. It functions in the pathway tRNA modification; N(7)-methylguanine-tRNA biosynthesis. Its function is as follows. Required for the formation of N(7)-methylguanine at position 46 (m7G46) in tRNA. In the complex, it is required to stabilize and induce conformational changes of the catalytic subunit. In Meyerozyma guilliermondii (strain ATCC 6260 / CBS 566 / DSM 6381 / JCM 1539 / NBRC 10279 / NRRL Y-324) (Yeast), this protein is tRNA (guanine-N(7)-)-methyltransferase non-catalytic subunit TRM82.